Here is a 363-residue protein sequence, read N- to C-terminus: Aminomethyltransferase (363 aa).

It belongs to the GcvT family. As to quaternary structure, the glycine cleavage system is composed of four proteins: P, T, L and H.

The enzyme catalyses N(6)-[(R)-S(8)-aminomethyldihydrolipoyl]-L-lysyl-[protein] + (6S)-5,6,7,8-tetrahydrofolate = N(6)-[(R)-dihydrolipoyl]-L-lysyl-[protein] + (6R)-5,10-methylene-5,6,7,8-tetrahydrofolate + NH4(+). Its function is as follows. The glycine cleavage system catalyzes the degradation of glycine. This is Aminomethyltransferase from Nitrosomonas eutropha (strain DSM 101675 / C91 / Nm57).